The chain runs to 328 residues: Ribosomal RNA small subunit methyltransferase H (328 aa).

Residues 64–66, Asp83, Phe112, Asp129, and Gln136 each bind S-adenosyl-L-methionine; that span reads GGH.

The protein belongs to the methyltransferase superfamily. RsmH family.

Its subcellular location is the cytoplasm. It carries out the reaction cytidine(1402) in 16S rRNA + S-adenosyl-L-methionine = N(4)-methylcytidine(1402) in 16S rRNA + S-adenosyl-L-homocysteine + H(+). Its function is as follows. Specifically methylates the N4 position of cytidine in position 1402 (C1402) of 16S rRNA. The sequence is that of Ribosomal RNA small subunit methyltransferase H from Bdellovibrio bacteriovorus (strain ATCC 15356 / DSM 50701 / NCIMB 9529 / HD100).